Consider the following 554-residue polypeptide: Potassium/proton antiporter CemA (554 aa).

A helical transmembrane segment spans residues 50-70; it reads SLFVVLFIPFFINIFTKIYVF. An insert region spans residues 113 to 410; that stretch reads KTENFFPEKP…VPYNFNKNTE (298 aa). 3 consecutive transmembrane segments (helical) span residues 429–449, 479–499, and 514–534; these read ISAITNLLADFMGLFILLFLL, MLLFTDLLVGFHSPRGWEVIF, and IIFLLVGTFPVLLDALFKYWI.

The protein belongs to the CemA family.

The protein localises to the plastid. Its subcellular location is the chloroplast inner membrane. The catalysed reaction is K(+)(in) + H(+)(out) = K(+)(out) + H(+)(in). Functionally, contributes to K(+)/H(+) antiport activity by supporting proton efflux to control proton extrusion and homeostasis in chloroplasts in a light-dependent manner to modulate photosynthesis. Prevents excessive induction of non-photochemical quenching (NPQ) under continuous-light conditions. Indirectly promotes efficient inorganic carbon uptake into chloroplasts. The chain is Potassium/proton antiporter CemA from Stigeoclonium helveticum (Green alga).